Consider the following 720-residue polypeptide: Putative glutamine--fructose-6-phosphate aminotransferase [isomerizing] (720 aa).

Catalysis depends on cysteine 2, which acts as the Nucleophile; for GATase activity. In terms of domain architecture, Glutamine amidotransferase type-2 spans 2 to 321 (CGIFGYCNFL…DNDIAHIYDG (320 aa)). Residues 266-280 (STTSTFNHGSSTETP) show a composition bias toward polar residues. Positions 266–285 (STTSTFNHGSSTETPAENGL) are disordered. SIS domains follow at residues 393-532 (WLTE…DLVS) and 565-710 (CDKK…VDLP).

The catalysed reaction is D-fructose 6-phosphate + L-glutamine = D-glucosamine 6-phosphate + L-glutamate. Its pathway is nucleotide-sugar biosynthesis; UDP-N-acetyl-alpha-D-glucosamine biosynthesis; alpha-D-glucosamine 6-phosphate from D-fructose 6-phosphate: step 1/1. Involved in amino sugar synthesis (formation of chitin, supplies the amino sugars of asparagine-linked oligosaccharides of glycoproteins). In Saccharomyces cerevisiae (strain RM11-1a) (Baker's yeast), this protein is Putative glutamine--fructose-6-phosphate aminotransferase [isomerizing].